Reading from the N-terminus, the 501-residue chain is Ammonium transporter 2 member 2 (501 aa).

Helical transmembrane passes span 35-55 (VAAT…YGSI), 64-84 (SAFM…LVGF), 140-160 (LVLF…GSLL), 174-194 (LWLL…GFLY), 203-223 (GGYV…YWVG), 238-258 (ILLM…FNGG), 274-294 (TNVS…IFFG), 298-318 (VIGA…GAGL), 322-342 (WSAM…MMIL), 356-376 (LAVF…TGLL), and 412-432 (FVTV…GLFI).

It belongs to the ammonia transporter channel (TC 1.A.11.2) family.

It localises to the membrane. Functionally, involved in ammonium transport. This Oryza sativa subsp. japonica (Rice) protein is Ammonium transporter 2 member 2 (AMT2-2).